We begin with the raw amino-acid sequence, 692 residues long: Elongation factor G (692 aa).

In terms of domain architecture, tr-type G spans 8 to 282; the sequence is ENTRNIGIMA…AVIDYLPSPL (275 aa). Residues 17 to 24, 81 to 85, and 135 to 138 contribute to the GTP site; these read AHIDAGKT, DTPGH, and NKMD.

Belongs to the TRAFAC class translation factor GTPase superfamily. Classic translation factor GTPase family. EF-G/EF-2 subfamily.

It localises to the cytoplasm. In terms of biological role, catalyzes the GTP-dependent ribosomal translocation step during translation elongation. During this step, the ribosome changes from the pre-translocational (PRE) to the post-translocational (POST) state as the newly formed A-site-bound peptidyl-tRNA and P-site-bound deacylated tRNA move to the P and E sites, respectively. Catalyzes the coordinated movement of the two tRNA molecules, the mRNA and conformational changes in the ribosome. The protein is Elongation factor G of Bacillus cereus (strain AH820).